The sequence spans 247 residues: Small ribosomal subunit protein uS3 (247 aa).

One can recognise a KH type-2 domain in the interval 39–109 (IRSMIRSFPE…KVQIKVKEIK (71 aa)). Positions 224–247 (RSRRESGQKSDELVRDERTHAERG) are disordered. The segment covering 227-247 (RESGQKSDELVRDERTHAERG) has biased composition (basic and acidic residues).

This sequence belongs to the universal ribosomal protein uS3 family. In terms of assembly, part of the 30S ribosomal subunit. Forms a tight complex with proteins S10 and S14.

Binds the lower part of the 30S subunit head. Binds mRNA in the 70S ribosome, positioning it for translation. This is Small ribosomal subunit protein uS3 from Treponema pallidum (strain Nichols).